The chain runs to 629 residues: Ionotropic receptor 75a (629 aa).

The Extracellular segment spans residues 1–335 (MQLVQLANFV…GDVFLQPFSP (335 aa)). 6 N-linked (GlcNAc...) asparagine glycosylation sites follow: N61, N112, N126, N144, N166, and N232. Residues 336 to 356 (LVWYLFGGVLSLIGVLLWITF) form a helical membrane-spanning segment. At 357–374 (YMECKRMQKRWRLDYLPS) the chain is on the cytoplasmic side. The chain crosses the membrane as a helical span at residues 375-395 (LLSTFLISFGAACIQSSSLIP). At 396 to 402 (RSAGGRL) the chain is on the extracellular side. A helical transmembrane segment spans residues 403 to 423 (IYFALFLISFIMYNYYTSVVV). Residues 424–592 (SSLLSSPVKS…NFVITVGMEY (169 aa)) are Cytoplasmic-facing. The helical transmembrane segment at 593–613 (VAPLLLMLICADILVVVILLV) threads the bilayer. At 614-629 (ELAWKRFFTRHLTFHP) the chain is on the extracellular side.

Belongs to the glutamate-gated ion channel (TC 1.A.10.1) family. In terms of tissue distribution, expressed in acetic-acid-sensing neurons in the antennal coeloconic 2 (ac2) and antennal coeloconic 3 (ac3) sensilla class of sensory hairs (at protein level).

It is found in the cell membrane. The protein resides in the cell projection. It localises to the dendrite. Functionally, odorant receptor for acetic and propionic acid. Functions as part of an olfactory receptor complex including the ionotropic receptor coreceptor Ir8a. The sequence is that of Ionotropic receptor 75a from Drosophila melanogaster (Fruit fly).